The following is a 573-amino-acid chain: Dihydroxy-acid dehydratase (573 aa).

Cys62 serves as a coordination point for [2Fe-2S] cluster. Asp94 lines the Mg(2+) pocket. Cys135 contacts [2Fe-2S] cluster. 2 residues coordinate Mg(2+): Asp136 and Lys137. An N6-carboxylysine modification is found at Lys137. Cys212 is a binding site for [2Fe-2S] cluster. Glu463 contacts Mg(2+). The active-site Proton acceptor is the Ser489.

The protein belongs to the IlvD/Edd family. Homodimer. It depends on [2Fe-2S] cluster as a cofactor. Mg(2+) serves as cofactor.

It carries out the reaction (2R)-2,3-dihydroxy-3-methylbutanoate = 3-methyl-2-oxobutanoate + H2O. It catalyses the reaction (2R,3R)-2,3-dihydroxy-3-methylpentanoate = (S)-3-methyl-2-oxopentanoate + H2O. It participates in amino-acid biosynthesis; L-isoleucine biosynthesis; L-isoleucine from 2-oxobutanoate: step 3/4. The protein operates within amino-acid biosynthesis; L-valine biosynthesis; L-valine from pyruvate: step 3/4. In terms of biological role, functions in the biosynthesis of branched-chain amino acids. Catalyzes the dehydration of (2R,3R)-2,3-dihydroxy-3-methylpentanoate (2,3-dihydroxy-3-methylvalerate) into 2-oxo-3-methylpentanoate (2-oxo-3-methylvalerate) and of (2R)-2,3-dihydroxy-3-methylbutanoate (2,3-dihydroxyisovalerate) into 2-oxo-3-methylbutanoate (2-oxoisovalerate), the penultimate precursor to L-isoleucine and L-valine, respectively. This is Dihydroxy-acid dehydratase from Renibacterium salmoninarum (strain ATCC 33209 / DSM 20767 / JCM 11484 / NBRC 15589 / NCIMB 2235).